The primary structure comprises 271 residues: MDSAFLKLDAAEFLEIWQRFDADDNGYIEGKELDEFFCHLLKKLGTNAITADKVQGVKDRFMSAYDITADGRLQIQELANMILPEDENFLLLFRRETPLDNSVEFMRIWRKFDEDSSGFISAVELRNFLQDLFLQHKKHITGDKLDEYTDTMMKLFNRNKDGRLDLNDLAKILALQENFLLQFKMDASSQEERKSDFETIFAHYDVSKTGALEGPEVDGFVKDMMELVKPSISGVDLDKFRQILLNHCDVNKDGKIQKSELALCLGLKANP.

EF-hand domains lie at 8 to 43, 53 to 88, 100 to 135, 144 to 179, 192 to 227, and 235 to 271; these read LDAA…LLKK, KVQG…EDEN, DNSV…LFLQ, KLDE…QENF, ERKS…MMEL, and VDLD…KANP. 5 residues coordinate Ca(2+): Asp-21, Asp-23, Asn-25, Tyr-27, and Glu-32. Asp-113, Asp-115, Ser-117, Glu-124, Asn-159, Asp-161, Arg-163, Asp-168, Asp-205, Ser-207, Thr-209, Glu-216, Asp-249, Asn-251, Asp-253, Lys-255, and Glu-260 together coordinate Ca(2+).

It localises to the cytoplasm. The sequence is that of Secretagogin (scgn) from Xenopus laevis (African clawed frog).